We begin with the raw amino-acid sequence, 450 residues long: Cyclic GMP-AMP phosphodiesterase SMPDL3A (450 aa).

The N-terminal stretch at 1-22 (MARLGALVCCLLAAWHCRPGLG) is a signal peptide. Positions 42 and 44 each coordinate Zn(2+). A disulfide bridge connects residues Cys-59 and Cys-78. A Zn(2+)-binding site is contributed by Asp-107. Position 111 (His-111) interacts with ATP. Residues Asn-124 and Asn-128 are each glycosylated (N-linked (GlcNAc...) asparagine). Asn-148 lines the Zn(2+) pocket. Residues Asn-148 and His-149 each contribute to the ATP site. Residues Asn-219 and Asn-235 are each glycosylated (N-linked (GlcNAc...) asparagine). Zn(2+) contacts are provided by His-249, His-290, and His-292. Asn-353 and Asn-370 each carry an N-linked (GlcNAc...) asparagine glycan. 2 cysteine pairs are disulfide-bonded: Cys-417–Cys-421 and Cys-427–Cys-440.

Belongs to the acid sphingomyelinase family. In terms of assembly, monomer. Homodimer; homodimerizes following 2',3'-cGAMP-binding. Requires Zn(2+) as cofactor.

The protein resides in the secreted. It catalyses the reaction 2',3'-cGAMP + H2O = 5'-pGpA(2'-5') + H(+). The enzyme catalyses 5'-pGpA(2'-5') + H2O = 5'-GpA(2'-5') + phosphate. The catalysed reaction is a ribonucleoside 5'-triphosphate + H2O = a ribonucleoside 5'-diphosphate + phosphate + H(+). It carries out the reaction ATP + H2O = ADP + phosphate + H(+). Its function is as follows. Cyclic-nucleotide phosphodiesterase that acts as a negative regulator of innate immunity by mediating degradation of 2',3'-cGAMP, thereby inhibiting the cGAS-STING signaling. Specifically linearizes 2',3'-cGAMP into 2'5'-bond pGpA and further hydrolyzes pGpA to produce GpA. Also has in vitro nucleotide phosphodiesterase activity with nucleoside triphosphates, such as ATP. Has in vitro activity with p-nitrophenyl-TMP. Has lower activity with nucleoside diphosphates, and no activity with nucleoside monophosphates. Has in vitro activity with CDP-choline, giving rise to CMP and phosphocholine. Has in vitro activity with CDP-ethanolamine. Does not have sphingomyelin phosphodiesterase activity. The chain is Cyclic GMP-AMP phosphodiesterase SMPDL3A (SMPDL3A) from Bos taurus (Bovine).